Reading from the N-terminus, the 262-residue chain is Virulence regulon transcriptional activator VirF (262 aa).

An HTH araC/xylS-type domain is found at 161–258 (DQIRKIVEKN…GITPKKFYLY (98 aa)). 2 DNA-binding regions (H-T-H motif) span residues 178–199 (SDIS…ESEK) and 225–248 (INDV…NEYY).

In terms of assembly, homodimer.

In terms of biological role, primary regulator of plasmid-encoded virulence genes. Activates the transcription of icsA (virG) and of virB, which is an activator of the ipaABCD virulence regulon. The protein is Virulence regulon transcriptional activator VirF (virF) of Shigella dysenteriae.